The primary structure comprises 124 residues: Large ribosomal subunit protein bL12 (124 aa).

Residues 94 to 124 (APKPVKESVPKAAAEEAKKKLEEAGAKAEIK) are disordered.

The protein belongs to the bacterial ribosomal protein bL12 family. In terms of assembly, homodimer. Part of the ribosomal stalk of the 50S ribosomal subunit. Forms a multimeric L10(L12)X complex, where L10 forms an elongated spine to which 2 to 4 L12 dimers bind in a sequential fashion. Binds GTP-bound translation factors.

Its function is as follows. Forms part of the ribosomal stalk which helps the ribosome interact with GTP-bound translation factors. Is thus essential for accurate translation. This is Large ribosomal subunit protein bL12 from Paraburkholderia phytofirmans (strain DSM 17436 / LMG 22146 / PsJN) (Burkholderia phytofirmans).